Reading from the N-terminus, the 118-residue chain is Large ribosomal subunit protein bL20 (118 aa).

It belongs to the bacterial ribosomal protein bL20 family.

Its function is as follows. Binds directly to 23S ribosomal RNA and is necessary for the in vitro assembly process of the 50S ribosomal subunit. It is not involved in the protein synthesizing functions of that subunit. This chain is Large ribosomal subunit protein bL20, found in Ralstonia pickettii (strain 12J).